The primary structure comprises 178 residues: Caveolin-1 (178 aa).

At S2 the chain carries N-acetylserine. A Phosphoserine modification is found at S2. Residues 2–94 are required for homooligomerization; sequence SGGKYVDSEG…WKASFTTFTV (93 aa). At 2 to 104 the chain is on the cytoplasmic side; that stretch reads SGGKYVDSEG…TKYWFYRLLS (103 aa). Residue K5 is modified to N6-acetyllysine; alternate. K5 participates in a covalent cross-link: Glycyl lysine isopeptide (Lys-Gly) (interchain with G-Cter in ubiquitin); alternate. Phosphotyrosine is present on Y6. The residue at position 9 (S9) is a Phosphoserine. A Phosphotyrosine; by ABL1 modification is found at Y14. Y25 is modified (phosphotyrosine). Glycyl lysine isopeptide (Lys-Gly) (interchain with G-Cter in ubiquitin) cross-links involve residues K26, K30, K39, K47, and K57. The interaction with CAVIN3 stretch occupies residues 82 to 94; that stretch reads DGIWKASFTTFTV. The segment at residues 105–125 is an intramembrane region (helical); sequence TIFGIPMALIWGIYFAILSFL. At 126–178 the chain is on the cytoplasmic side; the sequence is HIWAVVPCIKSFLIEIQCISRVYSIYVHTFCDPLFEAIGKIFSNVRISMQKEI. Residues 131–142 form an interacts with SPRY1, SPRY2, SPRY3 and SPRY4 region; that stretch reads VPCIKSFLIEIQ. 3 S-palmitoyl cysteine lipidation sites follow: C133, C143, and C156. Residues 149-160 are interacts with SPRY1, SPRY2, and SPRY4; it reads SIYVHTFCDPLF. The interacts with SPRY1, SPRY2, SPRY3 and SPRY4 stretch occupies residues 167 to 178; the sequence is FSNVRISMQKEI.

The protein belongs to the caveolin family. In terms of assembly, homooligomer. Interacts with GLIPR2. Interacts with NOSTRIN. Interacts with SNAP25 and STX1A. Interacts (via the N-terminus) with DPP4; the interaction is direct. Interacts with CTNNB1, CDH1 and JUP. Interacts with PACSIN2; this interaction induces membrane tubulation. Interacts with SLC7A9. Interacts with BMX and BTK. Interacts with TGFBR1. Interacts with CAVIN3 (via leucine-zipper domain) in a cholesterol-sensitive manner. Interacts with CAVIN1. Interacts with EHD2 in a cholesterol-dependent manner. Forms a ternary complex with UBXN6 and VCP; mediates CAV1 targeting to lysosomes for degradation. Interacts with ABCG1; this interaction regulates ABCG1-mediated cholesterol efflux. Interacts with NEU3; this interaction enhances NEU3 sialidase activity within caveola. Interacts (via C-terminus) with SPRY1, SPRY2 (via C-terminus), SPRY3, and SPRY4. Interacts with IGFBP5; this interaction allows trafficking of IGFBP5 from the plasma membrane to the nucleus. Post-translationally, phosphorylated at Tyr-14 by ABL1 in response to oxidative stress. Ubiquitinated. Undergo monoubiquitination and multi- and/or polyubiquitination. Monoubiquitination of N-terminal lysines promotes integration in a ternary complex with UBXN6 and VCP which promotes oligomeric CAV1 targeting to lysosomes for degradation. Ubiquitinated by ZNRF1; leading to degradation and modulation of the TLR4-mediated immune response.

Its subcellular location is the golgi apparatus membrane. It is found in the cell membrane. The protein resides in the membrane. It localises to the caveola. The protein localises to the membrane raft. Its function is as follows. May act as a scaffolding protein within caveolar membranes. Forms a stable heterooligomeric complex with CAV2 that targets to lipid rafts and drives caveolae formation. Mediates the recruitment of CAVIN proteins (CAVIN1/2/3/4) to the caveolae. Interacts directly with G-protein alpha subunits and can functionally regulate their activity. Involved in the costimulatory signal essential for T-cell receptor (TCR)-mediated T-cell activation. Its binding to DPP4 induces T-cell proliferation and NF-kappa-B activation in a T-cell receptor/CD3-dependent manner. Recruits CTNNB1 to caveolar membranes and may regulate CTNNB1-mediated signaling through the Wnt pathway. Negatively regulates TGFB1-mediated activation of SMAD2/3 by mediating the internalization of TGFBR1 from membrane rafts leading to its subsequent degradation. Binds 20(S)-hydroxycholesterol (20(S)-OHC). This is Caveolin-1 (CAV1) from Oryctolagus cuniculus (Rabbit).